Consider the following 228-residue polypeptide: MLSALSNDPMYFPPLETAFDNGLLAYGGDLSPQRLLSAYTKGIFPWYDNNSPILWWSPDPRCILLPENFRIPKTIQRELKKCTFSVTINNAFTEVITACATLPRTKQKGTWITQDMKMAYIQLHKLGFSHSIEVWDNSTLVGGLYGVALGKAFFGESMFHIAPHASKLALVWLAQYLWSYNFDFIDCQMPTTHIMRYGATLISRNEFLTRLTIAVTTGTSQASTKEAL.

This sequence belongs to the L/F-transferase family.

The protein resides in the cytoplasm. It carries out the reaction N-terminal L-lysyl-[protein] + L-leucyl-tRNA(Leu) = N-terminal L-leucyl-L-lysyl-[protein] + tRNA(Leu) + H(+). The catalysed reaction is N-terminal L-arginyl-[protein] + L-leucyl-tRNA(Leu) = N-terminal L-leucyl-L-arginyl-[protein] + tRNA(Leu) + H(+). It catalyses the reaction L-phenylalanyl-tRNA(Phe) + an N-terminal L-alpha-aminoacyl-[protein] = an N-terminal L-phenylalanyl-L-alpha-aminoacyl-[protein] + tRNA(Phe). Its function is as follows. Functions in the N-end rule pathway of protein degradation where it conjugates Leu, Phe and, less efficiently, Met from aminoacyl-tRNAs to the N-termini of proteins containing an N-terminal arginine or lysine. This Lawsonia intracellularis (strain PHE/MN1-00) protein is Leucyl/phenylalanyl-tRNA--protein transferase.